Here is a 35-residue protein sequence, read N- to C-terminus: Photosystem II reaction center protein T (35 aa).

A helical membrane pass occupies residues 3–23 (ALVYTFLLVSTLGIIFFAIFF).

The protein belongs to the PsbT family. As to quaternary structure, PSII is composed of 1 copy each of membrane proteins PsbA, PsbB, PsbC, PsbD, PsbE, PsbF, PsbH, PsbI, PsbJ, PsbK, PsbL, PsbM, PsbT, PsbY, PsbZ, Psb30/Ycf12, at least 3 peripheral proteins of the oxygen-evolving complex and a large number of cofactors. It forms dimeric complexes.

It localises to the plastid. It is found in the chloroplast thylakoid membrane. Its function is as follows. Found at the monomer-monomer interface of the photosystem II (PS II) dimer, plays a role in assembly and dimerization of PSII. PSII is a light-driven water plastoquinone oxidoreductase, using light energy to abstract electrons from H(2)O, generating a proton gradient subsequently used for ATP formation. The protein is Photosystem II reaction center protein T of Oenothera argillicola (Appalachian evening primrose).